A 377-amino-acid chain; its full sequence is Ferric enterobactin transport protein FepE (377 aa).

Residues 1 to 41 (MSSLNIKQGSDAHFPDYPLASPSNNEIDLLNLISVLWRAKK) lie on the Cytoplasmic side of the membrane. Residues 42–62 (TVMAVVFAFACAGLLISFILP) traverse the membrane as a helical segment. At 63–338 (QKWTSAAVVT…LPVKKDGPGK (276 aa)) the chain is on the periplasmic side. A helical transmembrane segment spans residues 339 to 359 (AIIVILSALIGGMVACGGVLL). At 360–377 (RYAMASRKQDAMMADHLV) the chain is on the cytoplasmic side.

This sequence belongs to the WzzB/Cld/Rol family.

The protein localises to the cell inner membrane. Its function is as follows. Part of the ferric enterobactin transport system. The chain is Ferric enterobactin transport protein FepE (fepE) from Escherichia coli (strain K12).